Here is a 487-residue protein sequence, read N- to C-terminus: 3-octaprenyl-4-hydroxybenzoate carboxy-lyase (487 aa).

N172 contributes to the Mn(2+) binding site. Prenylated FMN is bound by residues 175-177, 189-191, and 194-195; these read IYR, RWL, and RG. A Mn(2+)-binding site is contributed by E238. D287 functions as the Proton donor in the catalytic mechanism.

The protein belongs to the UbiD family. As to quaternary structure, homohexamer. It depends on prenylated FMN as a cofactor. Mn(2+) serves as cofactor.

The protein resides in the cell membrane. It carries out the reaction a 4-hydroxy-3-(all-trans-polyprenyl)benzoate + H(+) = a 2-(all-trans-polyprenyl)phenol + CO2. It functions in the pathway cofactor biosynthesis; ubiquinone biosynthesis. Its function is as follows. Catalyzes the decarboxylation of 3-octaprenyl-4-hydroxy benzoate to 2-octaprenylphenol, an intermediate step in ubiquinone biosynthesis. This Nitrosomonas eutropha (strain DSM 101675 / C91 / Nm57) protein is 3-octaprenyl-4-hydroxybenzoate carboxy-lyase.